A 385-amino-acid chain; its full sequence is Guanine nucleotide-binding protein alpha-5 subunit (385 aa).

Gly2 carries the N-myristoyl glycine lipid modification. Cys6 carries the S-palmitoyl cysteine lipid modification. Positions 32–385 (RKIKMLLLGI…NKNIETLSLE (354 aa)) constitute a G-alpha domain. The segment at 35–48 (KMLLLGISDSGKST) is G1 motif. GTP is bound by residues 40-47 (GISDSGKS), 174-180 (IHMRQTT), 199-203 (DVGGQ), 298-301 (NKID), and Ala357. 2 residues coordinate Mg(2+): Ser47 and Thr180. Positions 172-180 (DLIHMRQTT) are G2 motif. Residues 195–204 (IRLIDVGGQK) form a G3 motif region. Residues 294–301 (MLFLNKID) form a G4 motif region. Residues 355–360 (TQATIT) are G5 motif.

This sequence belongs to the G-alpha family. G proteins are composed of 3 units; alpha, beta and gamma. The alpha chain contains the guanine nucleotide binding site.

In terms of biological role, guanine nucleotide-binding proteins (G proteins) are involved as modulators or transducers in various transmembrane signaling systems. In Caenorhabditis briggsae, this protein is Guanine nucleotide-binding protein alpha-5 subunit (gpa-5).